The chain runs to 333 residues: MSATTLPNVSVAIIGAGIGGLTLGAFLRRLGIPFVILERTAVLTPLGAGISLAPNCLAALEQLGLYETIRQNAQELRGINVYREKRCWGTIDFGLAKQWFGYNVLSIERYEFHRYLYEAAGGAGVVQLGWDVARIEGLENADGDLRVISADGREVHTDIVVGADGIRSVTRRILSRSMGLQPENTIRFTGRVHMSGYTKPLSHLSTTDLGIGHWMLYNDCILTTWPCKENRQWFIGVKAAPPDEKSPDRSVWKGATSDTVNAVYGSRFHPFGEDGTVEASMYAIPAPAIAGNSRDDKLSIIPNASSLATSSRKPTSRTWFGAEWRSWVMVYRT.

Residues 6–26 (LPNVSVAIIGAGIGGLTLGAF) traverse the membrane as a helical segment. The FAD site is built by glutamate 38 and arginine 109. A glycan (N-linked (GlcNAc...) asparagine) is linked at asparagine 303.

This sequence belongs to the paxM FAD-dependent monooxygenase family. Requires FAD as cofactor.

Its subcellular location is the membrane. The protein operates within secondary metabolite biosynthesis. Its function is as follows. FAD-dependent monooxygenase; part of the gene cluster that mediates the biosynthesis of pyranterreones, a family of antioxidative compounds. The first step of pyranonigrins biosynthesis is performed by the hybrid PKS-NRPS synthetase pytA that condenses 4 malonyl-CoA units ato the acetyl starter unit by the modular PKS of pytA. The acyl chain is then connected to an L-serine through the amide bond by the modular NRPS of pytA. A tetramic acid is formed and released from the PKS-NRPS pytA to give pyranterreone 5 with the help of the thioesterase pytI. Pyranterreone 5 could be methylated by pytC to afford pyranterreone 6. Both pyranterreones 5 and 6 are subsequently oxidized by the FAD-linked oxidoreductase pytB and the cytochrome P450 monooxygenase pytD to form the fused gamma-pyrone core, resulting in pyranterreones 7 and 11, respectively. The hydroxy group at C-8 of pyranterreones 7 and 11 are dehydrated by the aspartyl protease pytH to form a delta-7 double bond to give pyranterreones 3 and 1, 2 accordingly. The exo-methylene of pyranterreone 3 could be reduced into a pendant methyl by reductase pytE to provide pyranterreone 4, also known as cordylactam. Pyranterreone 4 can be reconverted to pyranterreone 3 through pytB-catalyzed dehydrogenation or further oxidized to pyranterreones 9 and 10. This chain is FAD-dependent monooxygenase pytG, found in Aspergillus terreus (strain NIH 2624 / FGSC A1156).